A 241-amino-acid chain; its full sequence is Golgi-associated RAB2 interactor protein 6 (241 aa).

The protein belongs to the GARIN family.

The chain is Golgi-associated RAB2 interactor protein 6 from Homo sapiens (Human).